A 284-amino-acid polypeptide reads, in one-letter code: 1D-myo-inositol 2-acetamido-2-deoxy-alpha-D-glucopyranoside deacetylase (284 aa).

The Zn(2+) site is built by His12, Asp15, and His146.

This sequence belongs to the MshB deacetylase family. It depends on Zn(2+) as a cofactor.

It catalyses the reaction 1D-myo-inositol 2-acetamido-2-deoxy-alpha-D-glucopyranoside + H2O = 1D-myo-inositol 2-amino-2-deoxy-alpha-D-glucopyranoside + acetate. In terms of biological role, catalyzes the deacetylation of 1D-myo-inositol 2-acetamido-2-deoxy-alpha-D-glucopyranoside (GlcNAc-Ins) in the mycothiol biosynthesis pathway. In Mycolicibacterium vanbaalenii (strain DSM 7251 / JCM 13017 / BCRC 16820 / KCTC 9966 / NRRL B-24157 / PYR-1) (Mycobacterium vanbaalenii), this protein is 1D-myo-inositol 2-acetamido-2-deoxy-alpha-D-glucopyranoside deacetylase.